Consider the following 813-residue polypeptide: Leucine--tRNA ligase (813 aa).

Positions 41–51 (PYPSGTLHMGH) match the 'HIGH' region motif. Positions 575–579 (KMSKS) match the 'KMSKS' region motif. Lys-578 lines the ATP pocket.

This sequence belongs to the class-I aminoacyl-tRNA synthetase family.

It is found in the cytoplasm. The catalysed reaction is tRNA(Leu) + L-leucine + ATP = L-leucyl-tRNA(Leu) + AMP + diphosphate. The polypeptide is Leucine--tRNA ligase (Francisella tularensis subsp. holarctica (strain FTNF002-00 / FTA)).